The primary structure comprises 430 residues: Gamma-glutamyl phosphate reductase (430 aa).

This sequence belongs to the gamma-glutamyl phosphate reductase family.

It localises to the cytoplasm. The catalysed reaction is L-glutamate 5-semialdehyde + phosphate + NADP(+) = L-glutamyl 5-phosphate + NADPH + H(+). The protein operates within amino-acid biosynthesis; L-proline biosynthesis; L-glutamate 5-semialdehyde from L-glutamate: step 2/2. Functionally, catalyzes the NADPH-dependent reduction of L-glutamate 5-phosphate into L-glutamate 5-semialdehyde and phosphate. The product spontaneously undergoes cyclization to form 1-pyrroline-5-carboxylate. The sequence is that of Gamma-glutamyl phosphate reductase from Rhodopseudomonas palustris (strain HaA2).